A 100-amino-acid polypeptide reads, in one-letter code: Chorion class A protein M2774 (100 aa).

The left arm stretch occupies residues 1 to 33; sequence GGGWNGWNGLGGGWNGLGVGWSRLDGGYGGGCG. The central domain stretch occupies residues 34–81; it reads SYGGEGIGNVGVADELPVGGVTAVGGRVPIIGGVEYGGPARAAGAVSI. The interval 82–100 is right arm; sequence CGHCAPTCGCGRAGLGGYY.

Belongs to the chorion protein family.

In terms of biological role, this protein is one of many from the eggshell of the silk moth. This is Chorion class A protein M2774 from Bombyx mori (Silk moth).